A 252-amino-acid polypeptide reads, in one-letter code: RNA-binding protein 2 (252 aa).

Disordered stretches follow at residues 1 to 34 and 232 to 252; these read MADG…PSGV and RLQF…RGKR. The RRM domain occupies 152-238; sequence STLYVEGLPS…SYLRLQFSRS (87 aa). Residues 242–252 are compositionally biased toward gly residues; it reads RSGGPGPRGKR.

Its function is as follows. Probable RNA-binding protein. The polypeptide is RNA-binding protein 2 (Medicago truncatula (Barrel medic)).